Here is an 812-residue protein sequence, read N- to C-terminus: Fibrous sheath CABYR-binding protein (812 aa).

Positions 1–66 are disordered; it reads MEESDEPEQP…SIGNIPGGKA (66 aa). Phosphoserine is present on residues Ser-25, Ser-57, Ser-125, Ser-133, Ser-184, and Ser-273. Disordered regions lie at residues 269–333, 367–388, 424–547, and 672–741; these read IQAP…PKGT, DSGR…PPLS, FEDQ…PPSL, and PAEE…PSVK. The span at 275–286 shows a compositional bias: low complexity; sequence AKETSAAETTAK. Over residues 488–501 the composition is skewed to pro residues; the sequence is EVPPLPTEEWPLPP. Residues 502 to 513 are compositionally biased toward low complexity; it reads VTEESPAEVTPP. A compositionally biased stretch (acidic residues) spans 514 to 528; sequence ETEEGPIEPAEEGPE.

As to quaternary structure, interacts with CABYR.

It is found in the cell projection. The protein resides in the cilium. Its subcellular location is the flagellum. Functionally, may be involved in the later stages of fibrous sheath biogenesis. Binds calcium. This is Fibrous sheath CABYR-binding protein from Rattus norvegicus (Rat).